Consider the following 554-residue polypeptide: CTP synthase (554 aa).

The amidoligase domain stretch occupies residues 1 to 265; that stretch reads MTPLIFVTGG…DEIVVNQLKL (265 aa). Ser13 provides a ligand contact to CTP. Residue Ser13 coordinates UTP. ATP contacts are provided by residues 14–19 and Asp71; that span reads SLGKGI. Mg(2+) contacts are provided by Asp71 and Glu139. CTP is bound by residues 146-148, 186-191, and Lys222; these read DIE and KTKPTQ. UTP contacts are provided by residues 186-191 and Lys222; that span reads KTKPTQ. The 254-residue stretch at 292 to 545 folds into the Glutamine amidotransferase type-1 domain; the sequence is TIAVVGKYVD…IRAARERKAG (254 aa). Gly353 provides a ligand contact to L-glutamine. Cys380 functions as the Nucleophile; for glutamine hydrolysis in the catalytic mechanism. L-glutamine contacts are provided by residues 381-384, Glu404, and Arg471; that span reads YGMQ. Active-site residues include His518 and Glu520.

The protein belongs to the CTP synthase family. In terms of assembly, homotetramer.

The catalysed reaction is UTP + L-glutamine + ATP + H2O = CTP + L-glutamate + ADP + phosphate + 2 H(+). It catalyses the reaction L-glutamine + H2O = L-glutamate + NH4(+). It carries out the reaction UTP + NH4(+) + ATP = CTP + ADP + phosphate + 2 H(+). It functions in the pathway pyrimidine metabolism; CTP biosynthesis via de novo pathway; CTP from UDP: step 2/2. Allosterically activated by GTP, when glutamine is the substrate; GTP has no effect on the reaction when ammonia is the substrate. The allosteric effector GTP functions by stabilizing the protein conformation that binds the tetrahedral intermediate(s) formed during glutamine hydrolysis. Inhibited by the product CTP, via allosteric rather than competitive inhibition. Catalyzes the ATP-dependent amination of UTP to CTP with either L-glutamine or ammonia as the source of nitrogen. Regulates intracellular CTP levels through interactions with the four ribonucleotide triphosphates. This chain is CTP synthase, found in Stenotrophomonas maltophilia (strain R551-3).